A 298-amino-acid chain; its full sequence is Oxygen-dependent coproporphyrinogen-III oxidase (298 aa).

Serine 92 is a substrate binding site. Positions 96 and 106 each coordinate a divalent metal cation. The active-site Proton donor is the histidine 106. A substrate-binding site is contributed by asparagine 108–arginine 110. A divalent metal cation-binding residues include histidine 145 and histidine 175. Residues tyrosine 239–glutamate 274 are important for dimerization. Residue glycine 257–arginine 259 coordinates substrate.

The protein belongs to the aerobic coproporphyrinogen-III oxidase family. Homodimer. A divalent metal cation serves as cofactor.

Its subcellular location is the cytoplasm. It carries out the reaction coproporphyrinogen III + O2 + 2 H(+) = protoporphyrinogen IX + 2 CO2 + 2 H2O. It functions in the pathway porphyrin-containing compound metabolism; protoporphyrin-IX biosynthesis; protoporphyrinogen-IX from coproporphyrinogen-III (O2 route): step 1/1. Functionally, involved in the heme biosynthesis. Catalyzes the aerobic oxidative decarboxylation of propionate groups of rings A and B of coproporphyrinogen-III to yield the vinyl groups in protoporphyrinogen-IX. The chain is Oxygen-dependent coproporphyrinogen-III oxidase from Stenotrophomonas maltophilia (strain K279a).